The chain runs to 264 residues: Endoglucanase S (264 aa).

Positions 1–32 are cleaved as a signal peptide; that stretch reads MQTVNTQPHRIFRVLLPAVFSSLLLSSLTVSA.

The protein belongs to the glycosyl hydrolase 12 (cellulase H) family.

It catalyses the reaction Endohydrolysis of (1-&gt;4)-beta-D-glucosidic linkages in cellulose, lichenin and cereal beta-D-glucans.. The sequence is that of Endoglucanase S (celS) from Pectobacterium parmentieri.